The sequence spans 333 residues: MDERLLSGESAYEDADLEYSLRPQTLRQYIGQDKAKHNLEVFIEAAKMREETLDHVLLYGPPGLGKTTLANIIANEMGVNVRTTSGPAIERPGDLAAVLTSLQPGDVLFIDEIHRLHRSIEEVLYPAMEDFCLDIVIGKGPSARSVRLDLPPFTLVGATTRAGALSAPLRDRFGVLSRLEYYTVDQLSAIVERTAEVFEVEIDSLAALEIARRARGTPRIANRLLRRVRDFAQVRGNGTVTMEITQMALELLQVDKLGLDHIDHKLLLGIIEKFHGGPVGLETVSATIGEESHTIEDVYEPYLLQIGFLQRTPRGRIVTPLAYEHFGMEMPKV.

The segment at 1–182 (MDERLLSGES…FGVLSRLEYY (182 aa)) is large ATPase domain (RuvB-L). ATP-binding positions include Leu21, Arg22, Gly63, Lys66, Thr67, Thr68, 129–131 (EDF), Arg172, Tyr182, and Arg219. Thr67 is a Mg(2+) binding site. The segment at 183–253 (TVDQLSAIVE…ITQMALELLQ (71 aa)) is small ATPAse domain (RuvB-S). The tract at residues 256 to 333 (KLGLDHIDHK…EHFGMEMPKV (78 aa)) is head domain (RuvB-H). 2 residues coordinate DNA: Arg311 and Arg316.

Belongs to the RuvB family. In terms of assembly, homohexamer. Forms an RuvA(8)-RuvB(12)-Holliday junction (HJ) complex. HJ DNA is sandwiched between 2 RuvA tetramers; dsDNA enters through RuvA and exits via RuvB. An RuvB hexamer assembles on each DNA strand where it exits the tetramer. Each RuvB hexamer is contacted by two RuvA subunits (via domain III) on 2 adjacent RuvB subunits; this complex drives branch migration. In the full resolvosome a probable DNA-RuvA(4)-RuvB(12)-RuvC(2) complex forms which resolves the HJ.

It localises to the cytoplasm. The enzyme catalyses ATP + H2O = ADP + phosphate + H(+). Functionally, the RuvA-RuvB-RuvC complex processes Holliday junction (HJ) DNA during genetic recombination and DNA repair, while the RuvA-RuvB complex plays an important role in the rescue of blocked DNA replication forks via replication fork reversal (RFR). RuvA specifically binds to HJ cruciform DNA, conferring on it an open structure. The RuvB hexamer acts as an ATP-dependent pump, pulling dsDNA into and through the RuvAB complex. RuvB forms 2 homohexamers on either side of HJ DNA bound by 1 or 2 RuvA tetramers; 4 subunits per hexamer contact DNA at a time. Coordinated motions by a converter formed by DNA-disengaged RuvB subunits stimulates ATP hydrolysis and nucleotide exchange. Immobilization of the converter enables RuvB to convert the ATP-contained energy into a lever motion, pulling 2 nucleotides of DNA out of the RuvA tetramer per ATP hydrolyzed, thus driving DNA branch migration. The RuvB motors rotate together with the DNA substrate, which together with the progressing nucleotide cycle form the mechanistic basis for DNA recombination by continuous HJ branch migration. Branch migration allows RuvC to scan DNA until it finds its consensus sequence, where it cleaves and resolves cruciform DNA. The sequence is that of Holliday junction branch migration complex subunit RuvB from Bacillus anthracis (strain A0248).